Reading from the N-terminus, the 493-residue chain is Alpha-amylase-related protein (493 aa).

A signal peptide spans 1–19 (MFKFALTLTLCLAGSLSLA). Gln-20 is modified (pyrrolidone carboxylic acid). Cys-47 and Cys-103 are joined by a disulfide. Positions 117, 168, and 177 each coordinate Ca(2+). A disulfide bridge links Cys-156 with Cys-170. Arg-205 lines the chloride pocket. Asp-207 functions as the Nucleophile in the catalytic mechanism. His-211 is a binding site for Ca(2+). Glu-244 (proton donor) is an active-site residue. Residues Asn-307 and Arg-342 each contribute to the chloride site. Disulfide bonds link Cys-375/Cys-381, Cys-417/Cys-440, and Cys-447/Cys-459.

The protein belongs to the glycosyl hydrolase 13 family. As to quaternary structure, monomer. It depends on Ca(2+) as a cofactor. Chloride is required as a cofactor.

The protein resides in the secreted. It carries out the reaction Endohydrolysis of (1-&gt;4)-alpha-D-glucosidic linkages in polysaccharides containing three or more (1-&gt;4)-alpha-linked D-glucose units.. The polypeptide is Alpha-amylase-related protein (Amyrel) (Drosophila sechellia (Fruit fly)).